Consider the following 255-residue polypeptide: Methylthioribulose-1-phosphate dehydratase (255 aa).

Cys98 contributes to the substrate binding site. Zn(2+)-binding residues include His116 and His118. Glu150 acts as the Proton donor/acceptor in catalysis. His207 lines the Zn(2+) pocket.

This sequence belongs to the aldolase class II family. MtnB subfamily. Zn(2+) is required as a cofactor.

It is found in the cytoplasm. The enzyme catalyses 5-(methylsulfanyl)-D-ribulose 1-phosphate = 5-methylsulfanyl-2,3-dioxopentyl phosphate + H2O. The protein operates within amino-acid biosynthesis; L-methionine biosynthesis via salvage pathway; L-methionine from S-methyl-5-thio-alpha-D-ribose 1-phosphate: step 2/6. Its function is as follows. Catalyzes the dehydration of methylthioribulose-1-phosphate (MTRu-1-P) into 2,3-diketo-5-methylthiopentyl-1-phosphate (DK-MTP-1-P). In Pyricularia oryzae (strain 70-15 / ATCC MYA-4617 / FGSC 8958) (Rice blast fungus), this protein is Methylthioribulose-1-phosphate dehydratase.